Consider the following 780-residue polypeptide: ATP-dependent 6-phosphofructokinase, muscle type (780 aa).

An N-acetylthreonine modification is found at Thr-2. The interval 2–390 (THEEHHAAKS…NWEVYKLLAH (389 aa)) is N-terminal catalytic PFK domain 1. Residues Gly-25, 88-89 (RC), and 118-121 (GDGS) each bind ATP. Asp-119 is a Mg(2+) binding site. Residues 164–166 (SID), Arg-201, 208–210 (MGR), Glu-264, Arg-292, and 298–301 (HVQR) each bind substrate. Residue Asp-166 is the Proton acceptor of the active site. A Phosphoserine modification is found at Ser-377. Residues 391-401 (VRPPVTKSGSY) form an interdomain linker region. The C-terminal regulatory PFK domain 2 stretch occupies residues 402-780 (TVAVMNVGAP…TRKRSGEATI (379 aa)). Beta-D-fructose 2,6-bisphosphate contacts are provided by residues Arg-471 and 528–532 (TVSNN). An O-linked (GlcNAc) serine glycan is attached at Ser-530. The residue at position 557 (Lys-557) is an N6-(2-hydroxyisobutyryl)lysine. Beta-D-fructose 2,6-bisphosphate contacts are provided by residues Arg-566, 573–575 (MGG), Glu-629, Arg-655, and 661–664 (HMQQ). Ser-667 is subject to Phosphoserine. Arg-735 contributes to the beta-D-fructose 2,6-bisphosphate binding site. Ser-775 carries the post-translational modification Phosphoserine.

Belongs to the phosphofructokinase type A (PFKA) family. ATP-dependent PFK group I subfamily. Eukaryotic two domain clade 'E' sub-subfamily. Homo- and heterotetramers. Phosphofructokinase (PFK) enzyme functions as a tetramer composed of different combinations of 3 types of subunits, called PFKM (M), PFKL (L) and PFKP (P). The composition of the PFK tetramer differs according to the tissue type it is present in. The kinetic and regulatory properties of the tetrameric enzyme are dependent on the subunit composition, hence can vary across tissues. Interacts (via C-terminus) with HK1 (via N-terminal spermatogenic cell-specific region). The cofactor is Mg(2+). GlcNAcylation decreases enzyme activity.

The protein localises to the cytoplasm. It catalyses the reaction beta-D-fructose 6-phosphate + ATP = beta-D-fructose 1,6-bisphosphate + ADP + H(+). It participates in carbohydrate degradation; glycolysis; D-glyceraldehyde 3-phosphate and glycerone phosphate from D-glucose: step 3/4. With respect to regulation, allosterically activated by ADP, AMP, or fructose 2,6-bisphosphate, and allosterically inhibited by ATP or citrate. In terms of biological role, catalyzes the phosphorylation of D-fructose 6-phosphate to fructose 1,6-bisphosphate by ATP, the first committing step of glycolysis. The protein is ATP-dependent 6-phosphofructokinase, muscle type (PFKM) of Sus scrofa (Pig).